A 314-amino-acid polypeptide reads, in one-letter code: Leucotoxin LukE (314 aa).

A signal peptide spans 1 to 28 (MFKKKMLAASLSVGLIAPLASPIQESRA).

The protein belongs to the aerolysin family. As to quaternary structure, toxicity requires sequential binding and synergistic association of a class S and a class F component which form heterooligomeric complexes. LukE (class S) associates with LukD (class F). LukE can also associate with HlgB.

The protein resides in the secreted. In terms of biological role, part of a bi-component leucotoxin that acts by forming pores in the membrane of the target cells. LukE-LukD is as effective as the Panton-Valentine leucocidin (PVL) for inducing dermonecrosis when injected in the rabbit skin, but not hemolytic and poorly leucotoxic on human blood cells compared to other leucotoxins expressed by S.aureus. This is Leucotoxin LukE (lukE) from Staphylococcus aureus.